A 563-amino-acid polypeptide reads, in one-letter code: Proton channel OTOP2 (563 aa).

The tract at residues 1-20 (MSEELVPHPNESLPGPRASP) is disordered. Helical transmembrane passes span 30 to 50 (LLSV…ISGG), 62 to 82 (VFAL…FYLL), 100 to 120 (PIWL…MDVF), 137 to 157 (ILHP…LWIS), 173 to 193 (LMFT…DESV), 242 to 262 (FYLY…LYVM), 290 to 310 (FFAG…VFIL), 325 to 345 (ALVI…LVSL), 373 to 393 (LMGA…AVVV), 403 to 423 (LNLS…VFII), 496 to 516 (DISL…AFGA), and 528 to 548 (FYGY…GIFY).

It belongs to the otopetrin family. Expressed at higher level in stomach, testis and olfactory bulb.

The protein resides in the cell membrane. It catalyses the reaction H(+)(in) = H(+)(out). Actives at neutral and alkaline extracellular pH, acid extracellular pH appears to inhibit the channel. Insensitive to activation by Zn(2+). Its function is as follows. Proton-selective ion channel open at neutral pH. Actives at neutral and alkaline extracellular pH, likely participates in some alkali-related physiological activities. This chain is Proton channel OTOP2, found in Mus musculus (Mouse).